We begin with the raw amino-acid sequence, 476 residues long: Adenosylhomocysteinase (476 aa).

T62, D141, and E201 together coordinate substrate. An NAD(+)-binding site is contributed by 202–204; sequence TTT. Positions 231 and 235 each coordinate substrate. Residues N236, 265–270, E288, N323, 344–346, and N389 each bind NAD(+); these read GYGDVG and IGH.

This sequence belongs to the adenosylhomocysteinase family. Requires NAD(+) as cofactor.

Its subcellular location is the cytoplasm. The enzyme catalyses S-adenosyl-L-homocysteine + H2O = L-homocysteine + adenosine. The protein operates within amino-acid biosynthesis; L-homocysteine biosynthesis; L-homocysteine from S-adenosyl-L-homocysteine: step 1/1. May play a key role in the regulation of the intracellular concentration of adenosylhomocysteine. The chain is Adenosylhomocysteinase from Myxococcus xanthus (strain DK1622).